A 533-amino-acid chain; its full sequence is WD repeat-containing protein JIP5 (533 aa).

WD repeat units follow at residues 26 to 67 (NYSD…EKQS), 84 to 130 (GKVS…GSCR), 176 to 215 (NSND…GSKL), 264 to 309 (NQDD…FMDQ), and 372 to 409 (GAAD…EIAL). 2 stretches are compositionally biased toward acidic residues: residues 408 to 428 (ALDE…EDDL) and 437 to 452 (ASDE…EDEK). The disordered stretch occupies residues 408–533 (ALDESDDSDD…EHGIRRFDDL (126 aa)). Composition is skewed to basic and acidic residues over residues 453 to 463 (EDKPVKIDHPL) and 521 to 533 (QKHE…FDDL).

This sequence belongs to the WD repeat WDR55 family.

Its subcellular location is the nucleus. The protein localises to the nucleolus. This Scheffersomyces stipitis (strain ATCC 58785 / CBS 6054 / NBRC 10063 / NRRL Y-11545) (Yeast) protein is WD repeat-containing protein JIP5 (JIP5).